We begin with the raw amino-acid sequence, 660 residues long: DNA mismatch repair protein MutL (660 aa).

It belongs to the DNA mismatch repair MutL/HexB family.

Its function is as follows. This protein is involved in the repair of mismatches in DNA. It is required for dam-dependent methyl-directed DNA mismatch repair. May act as a 'molecular matchmaker', a protein that promotes the formation of a stable complex between two or more DNA-binding proteins in an ATP-dependent manner without itself being part of a final effector complex. The protein is DNA mismatch repair protein MutL of Streptococcus equi subsp. zooepidemicus (strain MGCS10565).